The following is a 687-amino-acid chain: MAGFDENVAVMGEWVPRSPSPGTLFSSAIGEEKSSKRVLERELSLNHGQVIGLEEDTSSNHNKDSSQSNVFRGGLSERIAARAGFNAPRLNTENIRTNTDFSIDSNLRSPCLTISSPGLSPATLLESPVFLSNPLAQPSPTTGKFPFLPGVNGNALSSEKAKDEFFDDIGASFSFHPVSRSSSSFFQGTTEMMSVDYGNYNNRSSSHQSAEEVKPGSENIESSNLYGIETDNQNGQNKTSDVTTNTSLETVDHQEEEEEQRRGDSMAGGAPAEDGYNWRKYGQKLVKGSEYPRSYYKCTNPNCQVKKKVERSREGHITEIIYKGAHNHLKPPPNRRSGMQVDGTEQVEQQQQQRDSAATWVSCNNTQQQGGSNENNVEEGSTRFEYGNQSGSIQAQTGGQYESGDPVVVVDASSTFSNDEDEDDRGTHGSVSLGYDGGGGGGGGEGDESESKRRKLEAFAAEMSGSTRAIREPRVVVQTTSDVDILDDGYRWRKYGQKVVKGNPNPRSYYKCTAPGCTVRKHVERASHDLKSVITTYEGKHNHDVPAARNSSHGGGGDSGNGNSGGSAAVSHHYHNGHHSEPPRGRFDRQVTTNNQSPFSRPFSFQPHLGPPSGFSFGLGQTGLVNLSMPGLAYGQGKMPGLPHPYMTQPVGMSEAMMQRGMEPKVEPVSDSGQSVYNQIMSRLPQI.

Positions 197–276 (YGNYNNRSSS…AGGAPAEDGY (80 aa)) are disordered. 2 stretches are compositionally biased toward polar residues: residues 199–208 (NYNNRSSSHQ) and 219–249 (NIES…TSLE). Positions 267 to 331 (AGGAPAEDGY…YKGAHNHLKP (65 aa)) form a DNA-binding region, WRKY 1. Positions 298, 303, 326, and 328 each coordinate Zn(2+). Disordered stretches follow at residues 324–384 (GAHN…STRF) and 416–453 (FSND…ESKR). Residues 354-379 (RDSAATWVSCNNTQQQGGSNENNVEE) are compositionally biased toward polar residues. The segment covering 435–444 (YDGGGGGGGG) has biased composition (gly residues). A DNA-binding region (WRKY 2) is located at residues 481–546 (SDVDILDDGY…YEGKHNHDVP (66 aa)). Zn(2+) is bound by residues Cys-512, Cys-517, His-541, and His-543. The interval 537-599 (YEGKHNHDVP…QVTTNNQSPF (63 aa)) is disordered. Gly residues predominate over residues 553–565 (HGGGGDSGNGNSG). The span at 578-589 (HHSEPPRGRFDR) shows a compositional bias: basic and acidic residues. The segment covering 590 to 599 (QVTTNNQSPF) has biased composition (polar residues).

The protein belongs to the WRKY group I family. Low expression in senescent leaves. Expressed in both the unfertilized egg cell and the pollen tube.

It is found in the nucleus. Its function is as follows. Transcription factor. Regulates WOX8 and WOX9 expression and basal cell division patterns during early embryogenesis. Interacts specifically with the W box (5'-(T)TGAC[CT]-3'), a frequently occurring elicitor-responsive cis-acting element. Required to repolarize the zygote from a transient symmetric state. The sequence is that of Probable WRKY transcription factor 2 from Arabidopsis thaliana (Mouse-ear cress).